Consider the following 446-residue polypeptide: D-inositol 3-phosphate glycosyltransferase (446 aa).

Position 19 (H19) interacts with 1D-myo-inositol 3-phosphate. UDP-N-acetyl-alpha-D-glucosamine is bound by residues 25–26 (QP) and G33. Residues 30–35 (DAGGMN), K88, Y121, T145, and R165 contribute to the 1D-myo-inositol 3-phosphate site. Residues R239, K244, and Q303 each coordinate UDP-N-acetyl-alpha-D-glucosamine. Residues Y312, R313, and S315 each coordinate Mg(2+). 2 residues coordinate UDP-N-acetyl-alpha-D-glucosamine: E325 and E333. T339 contacts Mg(2+).

The protein belongs to the glycosyltransferase group 1 family. MshA subfamily. Homodimer.

It catalyses the reaction 1D-myo-inositol 3-phosphate + UDP-N-acetyl-alpha-D-glucosamine = 1D-myo-inositol 2-acetamido-2-deoxy-alpha-D-glucopyranoside 3-phosphate + UDP + H(+). Its function is as follows. Catalyzes the transfer of a N-acetyl-glucosamine moiety to 1D-myo-inositol 3-phosphate to produce 1D-myo-inositol 2-acetamido-2-deoxy-glucopyranoside 3-phosphate in the mycothiol biosynthesis pathway. This chain is D-inositol 3-phosphate glycosyltransferase, found in Rhodococcus opacus (strain B4).